Here is a 418-residue protein sequence, read N- to C-terminus: Delta(14)-sterol reductase TM7SF2 (418 aa).

6 consecutive transmembrane segments (helical) span residues 13 to 35 (FGGP…HLLL), 62 to 81 (ALLL…LLPA), 102 to 124 (GFQA…LPLG), 129 to 148 (MLLP…SLFL), 255 to 277 (FGFM…QAQF), and 287 to 304 (LPMA…YYIF). NADP(+) contacts are provided by residues lysine 311, arginine 315, leucine 338, tryptophan 343, and 350-351 (NY). A helical membrane pass occupies residues 355-377 (LIMALAWSLPCGVSHLLPYFYLL). Residues aspartate 390, 394–398 (CLQKY), and tyrosine 405 contribute to the NADP(+) site.

It belongs to the ERG4/ERG24 family. As to expression, expressed in adult heart, brain, pancreas, lung, liver, skeletal muscle, kidney, ovary, prostate, testis and adrenal gland, but not detected in placenta, spleen, thymus, small intestine, colon (mucosal lining), or peripheral blood leukocytes.

It localises to the microsome membrane. The protein localises to the endoplasmic reticulum membrane. It carries out the reaction 4,4-dimethyl-5alpha-cholesta-8,24-dien-3beta-ol + NADP(+) = 4,4-dimethyl-5alpha-cholesta-8,14,24-trien-3beta-ol + NADPH + H(+). The enzyme catalyses 5alpha-cholest-8,14-dien-3beta-ol + NADPH + H(+) = 5alpha-cholest-8-en-3beta-ol + NADP(+). It catalyses the reaction 4,4-dimethyl-8,14-cholestadien-3beta-ol + NADPH + H(+) = 4,4-dimethyl-5alpha-cholest-8-en-3beta-ol + NADP(+). Its pathway is steroid biosynthesis; cholesterol biosynthesis. Catalyzes the reduction of the C14-unsaturated bond of lanosterol, as part of the metabolic pathway leading to cholesterol biosynthesis. The protein is Delta(14)-sterol reductase TM7SF2 (TM7SF2) of Homo sapiens (Human).